The primary structure comprises 205 residues: Protein N-terminal glutamine amidohydrolase (205 aa).

Active-site residues include Cys20, His74, and Asp90.

The protein belongs to the NTAQ1 family. In terms of assembly, monomer.

It carries out the reaction N-terminal L-glutaminyl-[protein] + H2O = N-terminal L-glutamyl-[protein] + NH4(+). In terms of biological role, mediates the side-chain deamidation of N-terminal glutamine residues to glutamate, an important step in N-end rule pathway of protein degradation. Conversion of the resulting N-terminal glutamine to glutamate renders the protein susceptible to arginylation, polyubiquitination and degradation as specified by the N-end rule. Does not act on substrates with internal or C-terminal glutamine and does not act on non-glutamine residues in any position. This Drosophila virilis (Fruit fly) protein is Protein N-terminal glutamine amidohydrolase (tun).